A 272-amino-acid polypeptide reads, in one-letter code: RELT-like protein 1 (272 aa).

The first 23 residues, 1-23, serve as a signal peptide directing secretion; the sequence is MALWGLPGSAVLAASVFVGGAVS. The Extracellular segment spans residues 24–58; that stretch reads SPLVAADNTGSHTLHSRAETTPSSPTNNPGNGHPE. The segment at 33–52 is disordered; that stretch reads GSHTLHSRAETTPSSPTNNP. The helical transmembrane segment at 59-79 threads the bilayer; that stretch reads YIAYVLVPVFFVMGLLGVLIC. Topologically, residues 80–272 are cytoplasmic; it reads HLLKKKGYRC…PVKRERSDTE (193 aa). Positions 90 to 114 form a coiled coil; it reads TTEAEQEVEEEKVEKIELNDSINEN. Phosphoserine is present on residues Ser110 and Ser115. Disordered regions lie at residues 146–171 and 235–272; these read DIES…PGAT and EHKS…SDTE. A compositionally biased stretch (pro residues) spans 156 to 166; sequence PGSPPVSPGPL. A compositionally biased stretch (basic and acidic residues) spans 235 to 245; it reads EHKSNQKERRS. A phosphoserine mark is found at Ser245 and Ser248.

The protein belongs to the RELT family. In terms of assembly, interacts with RELT, RELL2, OXSR1 and PLSCR1.

It is found in the cell membrane. In terms of biological role, induces activation of MAPK14/p38 cascade, when overexpressed. Induces apoptosis, when overexpressed. This Mus musculus (Mouse) protein is RELT-like protein 1 (Rell1).